A 108-amino-acid polypeptide reads, in one-letter code: MNLFLVLFVFSFSVSQFFAVEAGGRKHKHQEVCIGSDGKGHQLNQFWYDNGNCRRFYCYKDEDGLVIEQTTNCELAVAENDCRIKPGKAGRYPDCCPSVECPQESKAS.

The N-terminal stretch at methionine 1–alanine 19 is a signal peptide.

This sequence belongs to the scoloptoxin-16 family. Post-translationally, contains 4 disulfide bonds. As to expression, expressed by the venom gland.

It localises to the secreted. The sequence is that of U-scoloptoxin(16)-Sm1a from Scolopendra morsitans (Tanzanian blue ringleg centipede).